We begin with the raw amino-acid sequence, 971 residues long: Translation initiation factor IF-2 (971 aa).

Residues 48–63 (DHLRKSHGATDGDKRK) are compositionally biased toward basic and acidic residues. Disordered stretches follow at residues 48 to 86 (DHLR…ARTI) and 101 to 381 (DVAE…STFQ). Over residues 105-114 (GADQGQAQVA) the composition is skewed to low complexity. Basic and acidic residues predominate over residues 121 to 181 (ELKRREEEAR…EEEAATKRAA (61 aa)). Positions 182–203 (AEAAAAQQQAAAQQAAAEQEAT) are enriched in low complexity. Over residues 210–261 (DEARAAAERAAQREAAKKAEDAAREAADKARAEQEEISKRRAAAEAEARAIR) the composition is skewed to basic and acidic residues. The segment covering 277-286 (PPKPVEPPKP) has biased composition (pro residues). Residues 304–326 (ARPAVKKPAGAAAPATTQAPAGA) show a composition bias toward low complexity. Positions 356 to 369 (SSGGVDRGWRGGPK) are enriched in gly residues. The tr-type G domain maps to 471-640 (PRPPVVTVMG…LLQAEVLELK (170 aa)). Residues 480–487 (GHVDHGKT) are G1. A GTP-binding site is contributed by 480 to 487 (GHVDHGKT). Residues 505–509 (GITQH) are G2. Positions 526–529 (DTPG) are G3. Residues 526-530 (DTPGH) and 580-583 (NKID) each bind GTP. Residues 580 to 583 (NKID) are G4. A G5 region spans residues 616–618 (SAK).

It belongs to the TRAFAC class translation factor GTPase superfamily. Classic translation factor GTPase family. IF-2 subfamily.

It is found in the cytoplasm. Its function is as follows. One of the essential components for the initiation of protein synthesis. Protects formylmethionyl-tRNA from spontaneous hydrolysis and promotes its binding to the 30S ribosomal subunits. Also involved in the hydrolysis of GTP during the formation of the 70S ribosomal complex. This Burkholderia orbicola (strain MC0-3) protein is Translation initiation factor IF-2.